The sequence spans 252 residues: Phosphonates import ATP-binding protein PhnC 1 (252 aa).

The ABC transporter domain maps to 2 to 244 (ISLNKLGVTY…QLEEIYQTLS (243 aa)). Residue 35 to 42 (GSSGAGKS) participates in ATP binding.

The protein belongs to the ABC transporter superfamily. Phosphonates importer (TC 3.A.1.9.1) family. The complex is composed of two ATP-binding proteins (PhnC), two transmembrane proteins (PhnE) and a solute-binding protein (PhnD).

The protein localises to the cell inner membrane. It catalyses the reaction phosphonate(out) + ATP + H2O = phosphonate(in) + ADP + phosphate + H(+). Part of the ABC transporter complex PhnCDE involved in phosphonates import. Responsible for energy coupling to the transport system. This is Phosphonates import ATP-binding protein PhnC 1 from Trichodesmium erythraeum (strain IMS101).